The chain runs to 802 residues: Threonine--tRNA ligase 2, cytoplasmic (802 aa).

The residue at position 2 (A2) is an N-acetylalanine. Coiled-coil stretches lie at residues 3–23 (AEAL…EDIR) and 76–96 (AEER…AQEA). Residues 86–98 (ESAELEAAQEAGA) show a composition bias toward low complexity. The disordered stretch occupies residues 86-123 (ESAELEAAQEAGAQPPPSQSQDKDMKKKKMKESEADSE). Residues 106–123 (QDKDMKKKKMKESEADSE) show a composition bias toward basic and acidic residues. A TGS domain is found at 157-222 (DTSNIITVRV…EGDSSLELLT (66 aa)). Residue S453 is modified to Phosphoserine. Residues 786 to 792 (KLKNLRK) carry the Nuclear localization signal motif.

It belongs to the class-II aminoacyl-tRNA synthetase family. In terms of assembly, may be a component of the multisynthetase complex (MSC), a large multi-subunit complex which contains at least eight different aminoacyl-tRNA synthetases plus three auxillary subunits AIMP1, AIMP2 and EEF1E1. Interacts with the MSC components EPRS1, AIMP1, AIMP2 and KARS1.

It localises to the cytoplasm. It is found in the nucleus. It catalyses the reaction tRNA(Thr) + L-threonine + ATP = L-threonyl-tRNA(Thr) + AMP + diphosphate + H(+). Functionally, catalyzes the attachment of threonine to tRNA(Thr) in a two-step reaction: threonine is first activated by ATP to form Thr-AMP and then transferred to the acceptor end of tRNA(Thr). Also edits incorrectly charged tRNA(Thr) via its editing domain, at the post-transfer stage. The chain is Threonine--tRNA ligase 2, cytoplasmic from Homo sapiens (Human).